A 567-amino-acid chain; its full sequence is MSGVNNTSANDLSTTESNSNSVANAPSVKTEHNDSKNSLNLDATEPPIDLPQKPLSAYTTVAILCLMIAFGGFIFGWDTGTISGFVNLSDFIRRFGQKNDKGTYYLSKVRMGLIVSIFNIGCAIGGIVLSKVGDIYGRRIGLITVTAIYVVGILIQITSINKWYQYFIGRIISGLGVGGIAVLSPMLISEVAPKQIRGTLVQLYQLMCTMGIFLGYCTNYGTKNYHNATQWRVGLGLCFAWTTFMVSGMMFVPESPRYLIEVGKDEEAKRSLSKSNKVSVDDPALLAEYDTIKAGIELEKLAGNASWSELLSTKTKVFQRVLMGVMIQSLQQLTGDNYFFYYGTTIFKSVGLKDSFQTSIIIGVVNFFSSFIAVYTIERFGRRTCLLWGAASMLCCFAVFASVGVTKLWPQGSSHQDITSQGAGNCMIVFTMFFIFSFATTWAGGCYVIVSETFPLRVKSRGMAIATAANWMWGFLISFFTPFITGAINFYYGYVFLGCLVFAYFYVFFFVPETKGLTLEEVNTMWLEGVPAWKSASWVPPERRTADYDADAIDHDDRPIYKRFFSS.

Polar residues predominate over residues 1–16 (MSGVNNTSANDLSTTE). The segment at 1–45 (MSGVNNTSANDLSTTESNSNSVANAPSVKTEHNDSKNSLNLDATE) is disordered. At 1 to 56 (MSGVNNTSANDLSTTESNSNSVANAPSVKTEHNDSKNSLNLDATEPPIDLPQKPLS) the chain is on the cytoplasmic side. The span at 17–28 (SNSNSVANAPSV) shows a compositional bias: low complexity. The chain crosses the membrane as a helical span at residues 57–77 (AYTTVAILCLMIAFGGFIFGW). Topologically, residues 78 to 112 (DTGTISGFVNLSDFIRRFGQKNDKGTYYLSKVRMG) are extracellular. Asparagine 87 carries N-linked (GlcNAc...) asparagine glycosylation. A helical membrane pass occupies residues 113-133 (LIVSIFNIGCAIGGIVLSKVG). Residues 134 to 139 (DIYGRR) lie on the Cytoplasmic side of the membrane. A helical transmembrane segment spans residues 140–160 (IGLITVTAIYVVGILIQITSI). Over 161 to 170 (NKWYQYFIGR) the chain is Extracellular. The chain crosses the membrane as a helical span at residues 171-191 (IISGLGVGGIAVLSPMLISEV). Over 192–197 (APKQIR) the chain is Cytoplasmic. Residues 198 to 218 (GTLVQLYQLMCTMGIFLGYCT) traverse the membrane as a helical segment. Topologically, residues 219 to 232 (NYGTKNYHNATQWR) are extracellular. N-linked (GlcNAc...) asparagine glycosylation occurs at asparagine 227. A helical membrane pass occupies residues 233 to 253 (VGLGLCFAWTTFMVSGMMFVP). The Cytoplasmic portion of the chain corresponds to 254–336 (ESPRYLIEVG…IQSLQQLTGD (83 aa)). The chain crosses the membrane as a helical span at residues 337–353 (NYFFYYGTTIFKSVGLK). Topologically, residues 354–359 (DSFQTS) are extracellular. The helical transmembrane segment at 360 to 377 (IIIGVVNFFSSFIAVYTI) threads the bilayer. Residues 378-384 (ERFGRRT) are Cytoplasmic-facing. The helical transmembrane segment at 385–405 (CLLWGAASMLCCFAVFASVGV) threads the bilayer. The Extracellular segment spans residues 406–429 (TKLWPQGSSHQDITSQGAGNCMIV). A helical membrane pass occupies residues 430 to 450 (FTMFFIFSFATTWAGGCYVIV). At 451 to 467 (SETFPLRVKSRGMAIAT) the chain is on the cytoplasmic side. A helical transmembrane segment spans residues 468 to 488 (AANWMWGFLISFFTPFITGAI). Asparagine 489 is a topological domain (extracellular). Residues 490–510 (FYYGYVFLGCLVFAYFYVFFF) traverse the membrane as a helical segment. The Cytoplasmic portion of the chain corresponds to 511–567 (VPETKGLTLEEVNTMWLEGVPAWKSASWVPPERRTADYDADAIDHDDRPIYKRFFSS).

The protein belongs to the major facilitator superfamily. Sugar transporter (TC 2.A.1.1) family.

It localises to the membrane. In terms of biological role, probable glucose transporter. This is Hexose transporter HXT9 (HXT9) from Saccharomyces cerevisiae (strain ATCC 204508 / S288c) (Baker's yeast).